The primary structure comprises 522 residues: Nuclear pore glycoprotein p62 (522 aa).

Ser2 is modified (N-acetylserine). Tandem repeats lie at residues 6 to 7 (FG), 44 to 45 (FG), 76 to 77 (FG), 114 to 115 (FG), and 142 to 143 (FG). Residues 6 to 143 (FGGTGAPTGG…GTAPTGFVFG (138 aa)) are 5 X 2 AA repeats of F-G. Polar residues predominate over residues 169 to 179 (SGFNIGSAGNS). Disordered stretches follow at residues 169 to 215 (SGFN…ATIT) and 260 to 288 (APGA…SSTT). 2 stretches are compositionally biased toward low complexity: residues 180–215 (AQPT…ATIT) and 262–288 (GAAS…SSTT). A required for centrosome localization region spans residues 328-458 (MTYAQLESLI…QDLKDIIEHL (131 aa)). The stretch at 328 to 458 (MTYAQLESLI…QDLKDIIEHL (131 aa)) forms a coiled coil. A glycan (O-linked (GlcNAc) threonine) is linked at Thr373. 2 positions are modified to phosphoserine: Ser408 and Ser418. Ser468 is a glycosylation site (O-linked (GlcNAc) serine).

The protein belongs to the nucleoporin NSP1/NUP62 family. Component of the p62 complex, a complex at least composed of NUP62, NUP54, and NUP58. Interacts with NUP88. Interacts with NUTF2. Interacts with HIKESHI. Interacts with OSBPL8. Interacts with CAPG. Interacts with SAS6 and TUBG1 at the centrosome. Interacts with MCM3AP isoform GANP. In terms of assembly, (Microbial infection) Interacts with Epstein-barr virus BGLF4; this interaction allows BGLF4 nuclear entry. O-glycosylated. Contains about 10 N-acetylglucosamine side chain sites predicted for the entire protein, among which only one in the C-terminal. Post-translationally, the inner channel of the NPC has a different redox environment from the cytoplasm and allows the formation of interchain disulfide bonds between some nucleoporins, the significant increase of these linkages upon oxidative stress reduces the permeability of the NPC.

The protein resides in the nucleus. It localises to the nuclear pore complex. Its subcellular location is the cytoplasm. The protein localises to the cytoskeleton. It is found in the spindle pole. The protein resides in the nucleus envelope. It localises to the microtubule organizing center. Its subcellular location is the centrosome. Essential component of the nuclear pore complex. The N-terminal is probably involved in nucleocytoplasmic transport. The C-terminal is involved in protein-protein interaction probably via coiled-coil formation, promotes its association with centrosomes and may function in anchorage of p62 to the pore complex. Plays a role in mitotic cell cycle progression by regulating centrosome segregation, centriole maturation and spindle orientation. It might be involved in protein recruitment to the centrosome after nuclear breakdown. The polypeptide is Nuclear pore glycoprotein p62 (NUP62) (Homo sapiens (Human)).